The chain runs to 480 residues: Pyruvate kinase (480 aa).

Arg-36 contacts substrate. K(+) is bound by residues Asn-38, Ser-40, and Asp-70. An ATP-binding site is contributed by 38-41; sequence NFSH. ATP-binding residues include Arg-77 and Lys-160. A Mg(2+)-binding site is contributed by Glu-225. Substrate contacts are provided by Gly-251, Asp-252, and Thr-284. Position 252 (Asp-252) interacts with Mg(2+).

This sequence belongs to the pyruvate kinase family. Homotetramer. Mg(2+) serves as cofactor. K(+) is required as a cofactor.

The catalysed reaction is pyruvate + ATP = phosphoenolpyruvate + ADP + H(+). It participates in carbohydrate degradation; glycolysis; pyruvate from D-glyceraldehyde 3-phosphate: step 5/5. With respect to regulation, allosterically activated by AMP and by several sugar phosphates. Belongs to type II PK. This Buchnera aphidicola subsp. Acyrthosiphon pisum (strain APS) (Acyrthosiphon pisum symbiotic bacterium) protein is Pyruvate kinase (pykA).